Consider the following 696-residue polypeptide: Chitin synthase regulator SKT5 (696 aa).

Disordered stretches follow at residues 37–67 (GQDF…SANQ) and 90–145 (QEED…IKKR). The span at 41 to 53 (SDNKENRENRDNE) shows a compositional bias: basic and acidic residues. Residues 104–126 (LNNSNNTSLSSLGSTPTNSPSPG) are compositionally biased toward low complexity. The span at 129–139 (RQTNSSTSLTK) shows a compositional bias: polar residues. S148 is subject to Phosphoserine. Sel1-like repeat units lie at residues 271–306 (SDAQ…KHGH), 307–342 (IESA…SRNH), 343–382 (PSAM…ARAN), 386–423 (AAAP…SLGH), 424–460 (VPSA…LKGD), 461–498 (SVAM…NAGL), and 499–534 (PKAQ…GNED). Residues S561 and S563 each carry the phosphoserine modification. Phosphothreonine is present on T564. Polar residues-rich tracts occupy residues 576–593 (SNVG…TFFT), 605–634 (LQIN…SSAK), and 651–661 (VSLSNMGSSNM). The interval 576–696 (SNVGSNSRVS…GKKKKDCVIM (121 aa)) is disordered. Positions 662 to 675 (IRKDFPAVKTESKK) are enriched in basic and acidic residues. Over residues 680–696 (KNKKDKQGKKKKDCVIM) the composition is skewed to basic residues. Position 693 is a cysteine methyl ester (C693). C693 is lipidated: S-farnesyl cysteine. A propeptide spans 694–696 (VIM) (removed in mature form).

The protein belongs to the SKT5 family. May interact with CHS3 and seems to be an adapter (along with BNI4) to link CHS3 to septins. In terms of processing, farnesylation is required for chitin synthase CHS3 activity but is not required for SKT5 membrane association.

Its subcellular location is the cell membrane. In terms of biological role, activator of the chitin synthase CHS3 which polymerizes chitin, a structural polymer of the fungal cell wall. The protein is Chitin synthase regulator SKT5 of Saccharomyces cerevisiae (strain ATCC 204508 / S288c) (Baker's yeast).